A 363-amino-acid chain; its full sequence is Dihydroorotate dehydrogenase (quinone) (363 aa).

Residues Ala62–Lys66 and Thr86 each bind FMN. Lys66 contributes to the substrate binding site. Asn111–Phe115 contributes to the substrate binding site. Residues Asn142 and Asn175 each coordinate FMN. Asn175 serves as a coordination point for substrate. Ser178 functions as the Nucleophile in the catalytic mechanism. A substrate-binding site is contributed by Asn180. Positions 216 and 244 each coordinate FMN. Asn245–Thr246 is a substrate binding site. FMN is bound by residues Gly267, Gly296, and Tyr317 to Thr318.

It belongs to the dihydroorotate dehydrogenase family. Type 2 subfamily. In terms of assembly, monomer. FMN serves as cofactor.

The protein resides in the cell membrane. The catalysed reaction is (S)-dihydroorotate + a quinone = orotate + a quinol. Its pathway is pyrimidine metabolism; UMP biosynthesis via de novo pathway; orotate from (S)-dihydroorotate (quinone route): step 1/1. Functionally, catalyzes the conversion of dihydroorotate to orotate with quinone as electron acceptor. The sequence is that of Dihydroorotate dehydrogenase (quinone) from Anaeromyxobacter sp. (strain Fw109-5).